A 447-amino-acid chain; its full sequence is uncharacterized protein (447 aa).

The next 3 helical transmembrane spans lie at 28 to 48, 241 to 261, and 397 to 417; these read IVIVSATYSISLDSTVLYPAV, IDASFTSIFYSVFMLSIYYAI, and PFVLNVITVADGPCSFSLSIF.

The protein localises to the membrane. This is an uncharacterized protein from Schizosaccharomyces pombe (strain 972 / ATCC 24843) (Fission yeast).